Consider the following 62-residue polypeptide: Potassium channel toxin alpha-KTx Tx773 (62 aa).

The signal sequence occupies residues 1–18 (MQKLFIVLLLFCILRLDA). 3 cysteine pairs are disulfide-bonded: C28/C46, C33/C59, and C37/C61.

This sequence belongs to the short scorpion toxin superfamily. Potassium channel inhibitor family. Alpha-KTx 23 subfamily. In terms of tissue distribution, expressed by the venom gland.

Its subcellular location is the secreted. May block potassium channels. This is Potassium channel toxin alpha-KTx Tx773 from Buthus israelis (Israeli scorpion).